The following is a 273-amino-acid chain: MQLKKTQSEIKDIWKNREKFNDCNLKKTARIAIKEVIELLDSGKIRVAEKLSSGEWVVHKWIKQAILLHFLTEENKIIDNTNCWFDKIGNKFSEWNEEKFRRLKIRAVPGCFVRRSAYIGTNVVLMPSFINVGAYVDSGTMIDTWSTIGSCAQIGKNCHISGGVGIGGVLEPIQASPVIIEDNCFIGARSEVAEGVVVREGSVLGIGVFIGASTKIIDRETSKVFYGEVPPYSVVVPGSIPSKNNISTYCAVIVKKVDEKTRSKISINEILRD.

Positions 106 and 143 each coordinate substrate.

It belongs to the transferase hexapeptide repeat family. As to quaternary structure, homotrimer.

It is found in the cytoplasm. It catalyses the reaction (S)-2,3,4,5-tetrahydrodipicolinate + succinyl-CoA + H2O = (S)-2-succinylamino-6-oxoheptanedioate + CoA. The protein operates within amino-acid biosynthesis; L-lysine biosynthesis via DAP pathway; LL-2,6-diaminopimelate from (S)-tetrahydrodipicolinate (succinylase route): step 1/3. The protein is 2,3,4,5-tetrahydropyridine-2,6-dicarboxylate N-succinyltransferase of Wolbachia pipientis wMel.